The chain runs to 198 residues: Ribonuclease HII (198 aa).

One can recognise an RNase H type-2 domain in the interval 14-198 (GVIAGVDEVG…RNFAPISRAL (185 aa)). Aspartate 20, glutamate 21, and aspartate 112 together coordinate a divalent metal cation.

Belongs to the RNase HII family. Mn(2+) is required as a cofactor. The cofactor is Mg(2+).

Its subcellular location is the cytoplasm. It catalyses the reaction Endonucleolytic cleavage to 5'-phosphomonoester.. In terms of biological role, endonuclease that specifically degrades the RNA of RNA-DNA hybrids. The chain is Ribonuclease HII from Wolbachia sp. subsp. Drosophila simulans (strain wRi).